The sequence spans 1306 residues: Clustered mitochondria protein homolog (1306 aa).

Residues 1 to 11 show a composition bias toward low complexity; it reads MAVNNEVNNAA. A disordered region spans residues 1–47; sequence MAVNNEVNNAASETPTDVSSSSQKLATEETALTNGADHEEEDGGEAG. Residues 12–33 show a composition bias toward polar residues; it reads SETPTDVSSSSQKLATEETALT. A Clu domain is found at 336 to 580; sequence DITRTQENYL…RVTPLDITWM (245 aa). Disordered stretches follow at residues 630–689 and 912–956; these read ERKR…QERI and KQSQ…SPAA. Basic and acidic residues predominate over residues 656 to 689; that stretch reads EPAKSEEPTENGELAKKSESDEAAEPSKPDQERI. TPR repeat units follow at residues 1032–1065, 1074–1107, and 1116–1149; these read ARVY…SERT, LLNY…WKVV, and ITTI…CEEV. The interval 1275–1306 is disordered; the sequence is FIEGSDQSNQNKKRPGRSNPKRRGGAAATAGK. A compositionally biased stretch (basic residues) spans 1285 to 1298; the sequence is NKKRPGRSNPKRRG.

This sequence belongs to the CLU family. In terms of assembly, may associate with the eukaryotic translation initiation factor 3 (eIF-3) complex.

The protein localises to the cytoplasm. Its function is as follows. mRNA-binding protein involved in proper cytoplasmic distribution of mitochondria. The protein is Clustered mitochondria protein homolog of Botryotinia fuckeliana (strain B05.10) (Noble rot fungus).